Consider the following 339-residue polypeptide: Anthranilate phosphoribosyltransferase (339 aa).

5-phospho-alpha-D-ribose 1-diphosphate is bound by residues glycine 79, 82 to 83 (GD), serine 87, 89 to 92 (NIST), 107 to 115 (KHGNRSISS), and serine 119. Glycine 79 lines the anthranilate pocket. Mg(2+) is bound at residue serine 91. Asparagine 110 is a binding site for anthranilate. Anthranilate is bound at residue arginine 165. Mg(2+) is bound by residues aspartate 224 and glutamate 225.

The protein belongs to the anthranilate phosphoribosyltransferase family. Homodimer. It depends on Mg(2+) as a cofactor.

The enzyme catalyses N-(5-phospho-beta-D-ribosyl)anthranilate + diphosphate = 5-phospho-alpha-D-ribose 1-diphosphate + anthranilate. It functions in the pathway amino-acid biosynthesis; L-tryptophan biosynthesis; L-tryptophan from chorismate: step 2/5. Its function is as follows. Catalyzes the transfer of the phosphoribosyl group of 5-phosphorylribose-1-pyrophosphate (PRPP) to anthranilate to yield N-(5'-phosphoribosyl)-anthranilate (PRA). The sequence is that of Anthranilate phosphoribosyltransferase from Listeria monocytogenes serovar 1/2a (strain ATCC BAA-679 / EGD-e).